Consider the following 1150-residue polypeptide: Pyruvate carboxylase (1150 aa).

Positions 3–455 (QIKKLLVANR…TTKFIEETPE (453 aa)) constitute a Biotin carboxylation domain. Residues K119, K161, H211, and E278 each coordinate ATP. Residues 123-319 (RTTAIKADLP…IVKTQILVAA (197 aa)) form the ATP-grasp domain. R294 is a catalytic residue. The 270-residue stretch at 533–802 (VLLTDTTFRD…HLRTDIEGME (270 aa)) folds into the Pyruvate carboxyltransferase domain. 541 to 545 (RDAHQ) is a substrate binding site. Residues D542, K712, H741, and H743 each contribute to the Mn(2+) site. N6-carboxylysine is present on K712. A Biotinyl-binding domain is found at 1071–1146 (KADKSNPSHI…ATGDLLIEIE (76 aa)). An N6-biotinyllysine modification is found at K1112.

In terms of assembly, homotetramer. It depends on biotin as a cofactor.

The catalysed reaction is hydrogencarbonate + pyruvate + ATP = oxaloacetate + ADP + phosphate + H(+). Catalyzes a 2-step reaction, involving the ATP-dependent carboxylation of the covalently attached biotin in the first step and the transfer of the carboxyl group to pyruvate in the second. This chain is Pyruvate carboxylase (pycA), found in Staphylococcus aureus (strain Mu50 / ATCC 700699).